Consider the following 154-residue polypeptide: NADPH-dependent 7-cyano-7-deazaguanine reductase (154 aa).

The span at M1–S21 shows a compositional bias: polar residues. Residues M1–V26 form a disordered region. C52 functions as the Thioimide intermediate in the catalytic mechanism. D59 serves as the catalytic Proton donor. Substrate-binding positions include V74–S76 and H93–E94.

The protein belongs to the GTP cyclohydrolase I family. QueF type 1 subfamily.

The protein resides in the cytoplasm. It carries out the reaction 7-aminomethyl-7-carbaguanine + 2 NADP(+) = 7-cyano-7-deazaguanine + 2 NADPH + 3 H(+). Its pathway is tRNA modification; tRNA-queuosine biosynthesis. Functionally, catalyzes the NADPH-dependent reduction of 7-cyano-7-deazaguanine (preQ0) to 7-aminomethyl-7-deazaguanine (preQ1). The polypeptide is NADPH-dependent 7-cyano-7-deazaguanine reductase (Rhizobium etli (strain ATCC 51251 / DSM 11541 / JCM 21823 / NBRC 15573 / CFN 42)).